The following is a 626-amino-acid chain: Mini-chromosome maintenance complex-binding protein (626 aa).

Disordered stretches follow at residues 152–216 and 265–287; these read STSY…LDLN and PSSL…AHDP. The segment covering 177–196 has biased composition (basic and acidic residues); the sequence is KQREPHTEPHGNGDSKRQET. Over residues 197–210 the composition is skewed to polar residues; that stretch reads EAPSSQTTAPSDCS.

It belongs to the MCMBP family. As to quaternary structure, interacts with the mcm complex: associates with the mcm3-7 complex which lacks mcm2, while it does not interact with the mcm complex when mcm2 is present (mcm2-7 complex).

The protein resides in the nucleus. Functionally, associated component of the mcm complex that acts as a regulator of DNA replication. Binds to the MCM complex during late S phase and promotes the disassembly of the mcm complex from chromatin, thereby acting as a key regulator of pre-replication complex (pre-RC) unloading from replicated DNA. Can dissociate the mcm complex without addition of ATP; probably acts by destabilizing interactions of each individual subunits of the mcm complex. Required for sister chromatid cohesion. The protein is Mini-chromosome maintenance complex-binding protein (mcmbp) of Salmo salar (Atlantic salmon).